Reading from the N-terminus, the 147-residue chain is uncharacterized protein (147 aa).

The disordered stretch occupies residues P29–H147. 2 stretches are compositionally biased toward polar residues: residues S34–N45 and P60–S73. Residues P75–N92 are compositionally biased toward gly residues. Basic residues predominate over residues D122–H147.

This is an uncharacterized protein from Caenorhabditis elegans.